The sequence spans 196 residues: Small ribosomal subunit protein uS4c (196 aa).

Positions 16 to 36 (GTLPGLTSKRPKSGSDLKTQL) are disordered. An S4 RNA-binding domain is found at 89–150 (MRLDNILFRL…KQRSKALIQN (62 aa)).

The protein belongs to the universal ribosomal protein uS4 family. Part of the 30S ribosomal subunit. Contacts protein S5. The interaction surface between S4 and S5 is involved in control of translational fidelity.

The protein localises to the plastid. The protein resides in the chloroplast. Functionally, one of the primary rRNA binding proteins, it binds directly to 16S rRNA where it nucleates assembly of the body of the 30S subunit. Its function is as follows. With S5 and S12 plays an important role in translational accuracy. The protein is Small ribosomal subunit protein uS4c (rps4) of Rhapis humilis (Slender lady palm).